Reading from the N-terminus, the 219-residue chain is Transcription factor MYB23 (219 aa).

HTH myb-type domains follow at residues 9 to 61 and 62 to 116; these read EHEY…MNYL and SPNV…SKKL. DNA-binding regions (H-T-H motif) lie at residues 37–61 and 89–112; these read WNRI…MNYL and WSLI…NTHL.

Interacts with BHLH2/EGL3/MYC146, BHLH12/MYC1 and GL3. Expressed in roots, seed coats, leaves, stems and flowers. Detected specifically in trichomes, and in the cell division and differentiation zone of the root.

It is found in the nucleus. Its function is as follows. Transcription activator, when associated with BHLH2/EGL3/MYC146 or BHLH12/MYC1. Regulates the epidermal cell fate specification. Mediates the formation of columellae and accumulation of mucilages on seed coats. Controls the elongation of epidermal cells positively in roots but negatively in stems, leading to the promotion of primary roots elongation and repression of leaves and stems elongation, respectively. Ovoids ectopic root-hair formation, probably by inducing GL2 in roots. Controls trichome initiation and branching. The sequence is that of Transcription factor MYB23 (MYB23) from Arabidopsis thaliana (Mouse-ear cress).